A 776-amino-acid chain; its full sequence is Genome polyprotein (776 aa).

The segment at 1–27 (MAGKAVLKGKGGGPPRRASKVAPKKTR) is disordered. Over 1–98 (MAGKAVLKGK…LHRRGSRRTT (98 aa)) the chain is Cytoplasmic. Positions 17–27 (RASKVAPKKTR) are enriched in basic residues. The segment at 33 to 68 (MPNGLVLMRMLGVLWHALTGTARSPVLKAFWKVVPL) is hydrophobic; homodimerization of capsid protein C. The propeptide at 97–117 (TTIDWMTPLLITVMLGMCLTA) is ER anchor for the protein C, removed in mature form by serine protease NS3. The helical transmembrane segment at 99-117 (IDWMTPLLITVMLGMCLTA) threads the bilayer. Residues 118 to 242 (TVRRERDGSM…HLTRVEGWVW (125 aa)) are Extracellular-facing. Asn144 carries N-linked (GlcNAc...) asparagine; by host glycosylation. A helical membrane pass occupies residues 243-260 (KNKLFTLSLVMVAWLMVD). Residue Gly261 is a topological domain, cytoplasmic. A helical membrane pass occupies residues 262–280 (LLPRILIVVVALALVPAYA). Residues 281–727 (SRCTHLENRD…HTVLGGAFNT (447 aa)) lie on the Extracellular side of the membrane. Cystine bridges form between Cys283-Cys310, Cys340-Cys396, Cys354-Cys385, and Cys372-Cys401. Asn434 carries an N-linked (GlcNAc...) asparagine; by host glycan. Intrachain disulfides connect Cys466/Cys570 and Cys587/Cys618. An intramembrane region (helical) is located at residues 728-748 (LLGGVGFLPKILLGVAMAWLG). Topologically, residues 749–755 (LNMRNPT) are extracellular. The segment at residues 756-776 (LSMGFLLSGGLVLAMTLGVGA) is an intramembrane region (helical).

Post-translationally, specific enzymatic cleavages in vivo yield mature proteins Peptide 2K acts as a signal sequence and is removed from the N-terminus of NS4B by the host signal peptidase in the ER lumen. Signal cleavage at the 2K-4B site requires a prior NS3 protease-mediated cleavage at the 4A-2K site.

It localises to the virion. The protein localises to the secreted. The protein resides in the virion membrane. It is found in the host endoplasmic reticulum membrane. Capsid protein C self-assembles to form an icosahedral capsid about 30 nm in diameter. The capsid encapsulates the genomic RNA. Its function is as follows. prM acts as a chaperone for envelope protein E during intracellular virion assembly by masking and inactivating envelope protein E fusion peptide. prM is matured in the last step of virion assembly, presumably to avoid catastrophic activation of the viral fusion peptide induced by the acidic pH of the trans-Golgi network. After cleavage by host furin, the pr peptide is released in the extracellular medium and small envelope protein M and envelope protein E homodimers are dissociated. Functionally, envelope protein E binding to host cell surface receptor is followed by virus internalization through clathrin-mediated endocytosis. Envelope protein E is subsequently involved in membrane fusion between virion and host late endosomes. Synthesized as a homodimer with prM which acts as a chaperone for envelope protein E. After cleavage of prM, envelope protein E dissociate from small envelope protein M and homodimerizes. The sequence is that of Genome polyprotein from Homo sapiens (Human).